The following is an 87-amino-acid chain: Small ribosomal subunit protein bS20 (87 aa).

Residues 67 to 87 form a disordered region; it reads HKNNGSRKASRLDAYVQSKQQ.

This sequence belongs to the bacterial ribosomal protein bS20 family.

In terms of biological role, binds directly to 16S ribosomal RNA. In Metamycoplasma arthritidis (strain 158L3-1) (Mycoplasma arthritidis), this protein is Small ribosomal subunit protein bS20.